Consider the following 556-residue polypeptide: MSKSIEQFPKDLSSPLIQIKSSVEKNSKLHIKELFALEPERFHNYSVKFDQLFFDYSKQRVTKNILEQLVALAKNKQLTQWINRLFSQDKINCTEQREAMHWALRLPSEYSKFPELTKQVHTQLQRMYTLVEKIHAGQYRGATGEVIQDVVNIGVGGSDLGPHMVTHALADFKVKTAKPLNVHFVSTMDGSQLSDLLHQLRPETTLFIISSKSFGTIDTLSNAQTVRQWLEKALGKHDRVVKSHFIGVSTKAEKMTEWGIIPDNQLLLWEWVGGRYSLWSCIGFPIALTIGIDGFQQLLAGAHAVDEHFQNTSFERNIPVLMALLGIWNNNFLNIQTHAVLPYDGRLKYFAAYLQQLEMESNGKSVQRDGQKVELDTCPIVWGEVGPNAQHAFYQLLHQGTQAVSCDFMAPIQRYNADHFTYVENAEALIEQHHLALSNCLAQSRLLAFGNEALDAAELKNLPIYKQYEGNQPSSTLLLKELNPYSLGMLIALYEHKVFVQSVIWNINPFDQWGVEKGKQIADQLLPILNGVQNDLSTLDASTRGLIKILLGKVDG.

The active-site Proton donor is the glutamate 360. Residues histidine 391 and lysine 519 contribute to the active site.

This sequence belongs to the GPI family.

It is found in the cytoplasm. It catalyses the reaction alpha-D-glucose 6-phosphate = beta-D-fructose 6-phosphate. It functions in the pathway carbohydrate biosynthesis; gluconeogenesis. Its pathway is carbohydrate degradation; glycolysis; D-glyceraldehyde 3-phosphate and glycerone phosphate from D-glucose: step 2/4. Catalyzes the reversible isomerization of glucose-6-phosphate to fructose-6-phosphate. This Acinetobacter baumannii (strain AB0057) protein is Glucose-6-phosphate isomerase.